A 216-amino-acid chain; its full sequence is Peptide methionine sulfoxide reductase MsrA (216 aa).

The active site involves cysteine 54.

The protein belongs to the MsrA Met sulfoxide reductase family.

It catalyses the reaction L-methionyl-[protein] + [thioredoxin]-disulfide + H2O = L-methionyl-(S)-S-oxide-[protein] + [thioredoxin]-dithiol. The enzyme catalyses [thioredoxin]-disulfide + L-methionine + H2O = L-methionine (S)-S-oxide + [thioredoxin]-dithiol. Has an important function as a repair enzyme for proteins that have been inactivated by oxidation. Catalyzes the reversible oxidation-reduction of methionine sulfoxide in proteins to methionine. This chain is Peptide methionine sulfoxide reductase MsrA, found in Xanthomonas campestris pv. campestris (strain 8004).